The following is a 70-amino-acid chain: MKFPLLFISLALAAFLTRVQDADSSVISKEKSVRDGEEFPCAGTMADCRGLADNSVCCDTGKCIGEVCYY.

The N-terminal stretch at 1-21 (MKFPLLFISLALAAFLTRVQD) is a signal peptide. The propeptide occupies 22-33 (ADSSVISKEKSV). 3 disulfide bridges follow: Cys-41–Cys-58, Cys-48–Cys-63, and Cys-57–Cys-68.

In terms of tissue distribution, expressed by the venom duct.

It is found in the secreted. The chain is Conotoxin Cl6.13 from Californiconus californicus (California cone).